A 572-amino-acid chain; its full sequence is AAA ATPase forming ring-shaped complexes (572 aa).

The disordered stretch occupies residues 1 to 22; sequence MTEPRHESGSAAPQRPATDPVQ. Residues 21–67 are a coiled coil; it reads VQRQVNLLRDQKRNLDKQAAALASQNEKLVRLLNASRQEIVGLKKTL. 270 to 275 provides a ligand contact to ATP; it reads GNGKTL. Acidic residues predominate over residues 527–539; that stretch reads HEQQDLPDTEDSE. The segment at 527 to 572 is disordered; sequence HEQQDLPDTEDSEDWARLTGRRGDTIDSVHMASHRPQGEPGPGATP.

It belongs to the AAA ATPase family. In terms of assembly, homohexamer. Assembles into a hexameric ring structure.

The polypeptide is AAA ATPase forming ring-shaped complexes (Kocuria rhizophila (strain ATCC 9341 / DSM 348 / NBRC 103217 / DC2201)).